A 581-amino-acid chain; its full sequence is Prolactin receptor (581 aa).

A signal peptide spans 1 to 24 (MKENAASRVLFILLLFLFASLLNG). The Extracellular portion of the chain corresponds to 25–237 (QSPPEKPKLI…NDFPVKDTSM (213 aa)). 2 consecutive Fibronectin type-III domains span residues 27–127 (PPEK…IVEP) and 129–229 (PPVN…IPND). An intrachain disulfide couples cysteine 36 to cysteine 46. A glycan (N-linked (GlcNAc...) asparagine) is linked at asparagine 59. Cysteine 75 and cysteine 86 are joined by a disulfide. Residue asparagine 132 is glycosylated (N-linked (GlcNAc...) asparagine). Zn(2+) contacts are provided by aspartate 211 and histidine 212. Residues 215 to 219 (WSEWS) carry the WSXWS motif motif. The chain crosses the membrane as a helical span at residues 238-258 (WIFVGVLSAVICLIMVWAVAL). The Cytoplasmic portion of the chain corresponds to 259-581 (KGYSMVTCIL…SAKKAPPALP (323 aa)). A Box 1 motif motif is present at residues 267–275 (ILPPVPGPK). 2 stretches are compositionally biased toward basic and acidic residues: residues 323 to 349 (QHLM…DTDS) and 375 to 388 (HIPE…DPET). Disordered regions lie at residues 323 to 388 (QHLM…DPET) and 462 to 492 (FKPS…PDQD).

This sequence belongs to the type I cytokine receptor family. Type 1 subfamily. As to quaternary structure, interacts with SMARCA1. Interacts with NEK3 and VAV2 and this interaction is prolactin-dependent. As to expression, expressed in all tissues examined; liver, pituitary, adrenal gland, ovary and fetal liver.

It localises to the membrane. In terms of biological role, this is a receptor for the anterior pituitary hormone prolactin. The sequence is that of Prolactin receptor (PRLR) from Ovis aries (Sheep).